The sequence spans 827 residues: Lon protease (827 aa).

Residues 1–27 form a disordered region; it reads MNDETLREQTTAESEETSPTTPSPEPE. One can recognise a Lon N-terminal domain in the interval 32-225; sequence LPLIPLEGAV…KVLMFYRKQF (194 aa). Residue 385–392 coordinates ATP; that stretch reads GPPGVGKT. The 182-residue stretch at 625 to 806 folds into the Lon proteolytic domain; sequence IDQPGVAIGL…DEVLSIALLP (182 aa). Active-site residues include serine 712 and lysine 755.

It belongs to the peptidase S16 family. As to quaternary structure, homohexamer. Organized in a ring with a central cavity.

It is found in the cytoplasm. The enzyme catalyses Hydrolysis of proteins in presence of ATP.. In terms of biological role, ATP-dependent serine protease that mediates the selective degradation of mutant and abnormal proteins as well as certain short-lived regulatory proteins. Required for cellular homeostasis and for survival from DNA damage and developmental changes induced by stress. Degrades polypeptides processively to yield small peptide fragments that are 5 to 10 amino acids long. Binds to DNA in a double-stranded, site-specific manner. This is Lon protease from Chloroflexus aurantiacus (strain ATCC 29366 / DSM 635 / J-10-fl).